We begin with the raw amino-acid sequence, 277 residues long: Large ribosomal subunit protein uL2 (277 aa).

2 disordered regions span residues 37-60 and 223-265; these read KNST…GHKH and VVMN…KRTD. The segment covering 39–49 has biased composition (polar residues); the sequence is STAGRNSNGHI. Positions 50-60 are enriched in basic residues; the sequence is TTRHKGGGHKH. A compositionally biased stretch (basic and acidic residues) spans 229–244; it reads DHPHGGGEGRTGEARE.

It belongs to the universal ribosomal protein uL2 family. In terms of assembly, part of the 50S ribosomal subunit. Forms a bridge to the 30S subunit in the 70S ribosome.

One of the primary rRNA binding proteins. Required for association of the 30S and 50S subunits to form the 70S ribosome, for tRNA binding and peptide bond formation. It has been suggested to have peptidyltransferase activity; this is somewhat controversial. Makes several contacts with the 16S rRNA in the 70S ribosome. This Neisseria meningitidis serogroup C (strain 053442) protein is Large ribosomal subunit protein uL2.